Reading from the N-terminus, the 118-residue chain is Aspartate 1-decarboxylase (118 aa).

The active-site Schiff-base intermediate with substrate; via pyruvic acid is the Ser25. Ser25 carries the post-translational modification Pyruvic acid (Ser). Thr57 provides a ligand contact to substrate. Catalysis depends on Tyr58, which acts as the Proton donor. 73-75 (GAA) serves as a coordination point for substrate.

It belongs to the PanD family. As to quaternary structure, heterooctamer of four alpha and four beta subunits. Requires pyruvate as cofactor. Is synthesized initially as an inactive proenzyme, which is activated by self-cleavage at a specific serine bond to produce a beta-subunit with a hydroxyl group at its C-terminus and an alpha-subunit with a pyruvoyl group at its N-terminus.

The protein localises to the cytoplasm. The enzyme catalyses L-aspartate + H(+) = beta-alanine + CO2. It participates in cofactor biosynthesis; (R)-pantothenate biosynthesis; beta-alanine from L-aspartate: step 1/1. In terms of biological role, catalyzes the pyruvoyl-dependent decarboxylation of aspartate to produce beta-alanine. The chain is Aspartate 1-decarboxylase from Leptospira biflexa serovar Patoc (strain Patoc 1 / Ames).